The sequence spans 15639 residues: FR901469 synthetase (15639 aa).

The Carrier 1 domain maps to 5–81 (HTSDGLRKLL…DLVDKIIEQQ (77 aa)). Ser42 carries the O-(pantetheine 4'-phosphoryl)serine modification. Residues 82-94 (LEEEEEDDDSLDN) are compositionally biased toward acidic residues. The tract at residues 82–105 (LEEEEEDDDSLDNESERDHSQKDL) is disordered. The segment at 140 to 553 (PCLSMQEGCL…RDFLPLTEDD (414 aa)) is condensation 1. The interval 579-971 (TISKQPDAVA…LGRRDTQVKI (393 aa)) is adenylation 1. One can recognise a Carrier 2 domain in the interval 1108–1184 (TPATAIEKEL…ELALVARSTT (77 aa)). An O-(pantetheine 4'-phosphoryl)serine modification is found at Ser1145. The interval 1219–1626 (RSSNRFNQSV…TITHLVKRLA (408 aa)) is epimerase 1. The condensation 2 stretch occupies residues 1667–2097 (EDVLPCTPIQ…LGNLSLLTNN (431 aa)). Positions 2122-2518 (QEAAKEYTNA…GRRDNQIKIR (397 aa)) are adenylation 2. One can recognise a Carrier 3 domain in the interval 2654 to 2730 (VPATALEKQL…ELALKAKSTT (77 aa)). Ser2691 is modified (O-(pantetheine 4'-phosphoryl)serine). The tract at residues 2761 to 3176 (VSAGEHRYNQ…TELLHRLEQM (416 aa)) is epimerase 2. The interval 3215–3640 (QDIYPCSPTQ…DDLIMMSPED (426 aa)) is condensation 3. Residues 3669-4059 (TQPHAPAVAA…MGRIDSQIKI (391 aa)) are adenylation 3. The 77-residue stretch at 4193–4269 (PPSNDAERMV…QLAAIVTQRG (77 aa)) folds into the Carrier 4 domain. Residue Ser4230 is modified to O-(pantetheine 4'-phosphoryl)serine. Residues 4316–4714 (EDVYPCTPLQ…ILAHGTGLEE (399 aa)) are condensation 4. Residues 4756–5149 (TEAASTRPDA…GRLDTQAKLR (394 aa)) form an adenylation 4 region. In terms of domain architecture, Carrier 5 spans 5284-5360 (EPATIMERQL…DLASHIDHHT (77 aa)). At Ser5321 the chain carries O-(pantetheine 4'-phosphoryl)serine. Positions 5402-5802 (EDIYPCTPLQ…TVFAQLCDSS (401 aa)) are condensation 5. The adenylation 5 stretch occupies residues 5847 to 6238 (KYPNEPAVHA…LGRRDSQMKV (392 aa)). The region spanning 6375-6451 (QPSTTAEIKL…DMAKIVEEHV (77 aa)) is the Carrier 6 domain. Ser6412 bears the O-(pantetheine 4'-phosphoryl)serine mark. The interval 6494 to 6889 (EDVYPATPLQ…RFAKVYQQLS (396 aa)) is condensation 6. The interval 6952–7335 (WDGSMTYAEL…GRRDTQIKIR (384 aa)) is adenylation 6. Residues 7473–7546 (TAMEEQLRTV…QLALLASTDE (74 aa)) enclose the Carrier 7 domain. Ser7507 bears the O-(pantetheine 4'-phosphoryl)serine mark. Residues 7580–7992 (MGENRYNQSV…SKTLEELTTQ (413 aa)) form an epimerase 3 region. The segment at 8034-8459 (EDVFPASPMQ…QRMRNISLAS (426 aa)) is condensation 7. The interval 8486 to 8882 (QKSVHARPDA…GRRDTQVKIR (397 aa)) is adenylation 7. In terms of domain architecture, Carrier 8 spans 9015-9091 (QPATDAERQL…DLAKTIQDSE (77 aa)). Ser9052 is subject to O-(pantetheine 4'-phosphoryl)serine. The condensation 8 stretch occupies residues 9136–9535 (EDVYPCTPLQ…FAAIFRQLCD (400 aa)). The segment at 9583–9974 (KNPHAIAVNA…GRRDNQMKIR (392 aa)) is adenylation 8. Positions 10110–10186 (EPATPMEMQL…GLAALIQKQI (77 aa)) constitute a Carrier 9 domain. An O-(pantetheine 4'-phosphoryl)serine modification is found at Ser10147. The interval 10186–10208 (IDEEEEYDDSEEEEEDDEEEVRE) is disordered. Acidic residues predominate over residues 10187–10206 (DEEEEYDDSEEEEEDDEEEV). Positions 10240 to 10662 (VEDVYPCTPL…VLSETDKTKI (423 aa)) are condensation 9. Residues 10683 to 11082 (KQAIERPNAP…GRRDTQIKIR (400 aa)) are adenylation 9. Positions 11217–11293 (EPATGMERHL…DLARETESQG (77 aa)) constitute a Carrier 10 domain. Position 11254 is an O-(pantetheine 4'-phosphoryl)serine (Ser11254). Positions 11329–11725 (EDVYPCTPLQ…ETIFQQLSSV (397 aa)) are condensation 10. The tract at residues 11770 to 12165 (FKRTADKQPE…GRRDTQIKVR (396 aa)) is adenylation 10. Positions 12298–12374 (EPSTEMERRI…DLAAAVQGRI (77 aa)) constitute a Carrier 11 domain. Position 12335 is an O-(pantetheine 4'-phosphoryl)serine (Ser12335). The tract at residues 12418–12830 (EDVYPATPLQ…IQDIEMVSEQ (413 aa)) is condensation 11. The tract at residues 12861 to 13249 (SRADEIAICA…GRRDTQIKIR (389 aa)) is adenylation 11. A Carrier 12 domain is found at 13383–13459 (MPGTVQEEQL…QLGQKVKEAV (77 aa)). At Ser13420 the chain carries O-(pantetheine 4'-phosphoryl)serine. The epimerase 4 stretch occupies residues 13476–13901 (APIQQMFFEQ…LKDMTSTLLQ (426 aa)). A condensation 12 region spans residues 13940–14369 (EDILPCSPIQ…SIVGEHDLQQ (430 aa)). Residues 14390 to 14789 (RDAAHRTPDA…GRGDGQIKIR (400 aa)) are adenylation 12. One can recognise a Carrier 13 domain in the interval 14916–14992 (LPASADEGAL…DMASVASAAR (77 aa)). Ser14953 is subject to O-(pantetheine 4'-phosphoryl)serine. A condensation 13 region spans residues 15062–15433 (QHAVDLAALK…DIMVRLASQQ (372 aa)). 2 disordered regions span residues 15434 to 15511 (EGTV…ENRQ) and 15617 to 15639 (VQTN…KGHI). The span at 15455–15472 (NGTNGSNGDGTDAANGIG) shows a compositional bias: low complexity. The segment covering 15482-15494 (AVEKSSGDAEVEK) has biased composition (basic and acidic residues). Over residues 15495–15511 (VSTNGHADNNTSAENRQ) the composition is skewed to polar residues.

The protein belongs to the NRP synthetase family.

It functions in the pathway antifungal biosynthesis. Its function is as follows. Nonribosomal peptide synthetase; part of the gene cluster that mediates the biosynthesis of the antifungal antibiotic FR901469, an inhibitor of beta-1,3-glucansynthase, exerting antifungal activity against the pathogenes Candida albicans and Aspergillus fumigatus. FR901469 is a cyclic depsipeptide containing 12 amino acid residues and a fatty acid chain. The NRPS frbI contains 12 modules responsible for the formation of the depsipeptide backbone which is denoted as Acyl-Thr-Ala-Tyr-Val-4OHPro-Thr-Thr-3OHPro-threo3OHGln-Gly-Thr-Orn-OH (C71H116N14O23). The PKS frbB is probably involved in the production of the hydrocarbon chain, and the acyl-CoA ligase frbC might be involved in the transport of the chain to the peptide ptoduct of frbI. Because FR901469 contains 3 hydroxylated amino acid residues, the 3 oxygenases frbA, frbH, and frbJ might be participating in amino acid hydroxylation. As no thioesterase domains were detected in frbI or frbB, the thioesterases frbD and frbE may instead release and cyclize the products of the NRPS and PKS, respectively. This is FR901469 synthetase from Dothideomycetidae sp. (strain 11243) (Fungal sp. (strain No.11243)).